The following is a 792-amino-acid chain: uncharacterized protein (792 aa).

361–362 (WD) contacts substrate. E488 serves as the catalytic Proton donor. 590–591 (KQ) is a binding site for substrate. Residues 753 to 792 (DSPSTIAVRDRKPLLPPPSQPPGREPVSRRHKSLIISAAR) are disordered. Pro residues predominate over residues 766–776 (LLPPPSQPPGR).

The protein belongs to the glycosyl hydrolase 65 family.

This is an uncharacterized protein from Mycobacterium leprae (strain TN).